Here is an 89-residue protein sequence, read N- to C-terminus: Small ribosomal subunit protein uS15 (89 aa).

Belongs to the universal ribosomal protein uS15 family. Part of the 30S ribosomal subunit. Forms a bridge to the 50S subunit in the 70S ribosome, contacting the 23S rRNA.

One of the primary rRNA binding proteins, it binds directly to 16S rRNA where it helps nucleate assembly of the platform of the 30S subunit by binding and bridging several RNA helices of the 16S rRNA. Functionally, forms an intersubunit bridge (bridge B4) with the 23S rRNA of the 50S subunit in the ribosome. In Shewanella halifaxensis (strain HAW-EB4), this protein is Small ribosomal subunit protein uS15.